Reading from the N-terminus, the 120-residue chain is Succinate dehydrogenase membrane anchor subunit (120 aa).

At 1 to 17 the chain is on the mitochondrial matrix side; the sequence is MTEKLLHFIRTKSGSMH. The helical transmembrane segment at 18 to 38 threads the bilayer; sequence WWLQRFLAILLAPIILYLLFD. Residues 39 to 63 are Mitochondrial intermembrane-facing; the sequence is VAIYIGQQSDPTVMMFLNRIFNHNS. The chain crosses the membrane as a helical span at residues 64 to 85; that stretch reads IFIFITSVILIWHVRGGMEVII. H76 lines the heme pocket. Residues 86-95 are Mitochondrial matrix-facing; that stretch reads EDYVHGEKTR. Y88 provides a ligand contact to a ubiquinone. Residues 96 to 120 traverse the membrane as a helical segment; the sequence is IVSIFLIRVIAIEIMEYLYKCSIIF.

Part of an enzyme complex containing four subunits: a flavoprotein, an iron-sulfur protein, plus two membrane-anchoring proteins. It depends on heme as a cofactor.

It is found in the mitochondrion inner membrane. Its pathway is carbohydrate metabolism; tricarboxylic acid cycle. Functionally, membrane-anchoring subunit of succinate dehydrogenase (SDH). This Reclinomonas americana protein is Succinate dehydrogenase membrane anchor subunit (SDH4).